A 509-amino-acid polypeptide reads, in one-letter code: Maturase K (509 aa).

This sequence belongs to the intron maturase 2 family. MatK subfamily.

It localises to the plastid. The protein resides in the chloroplast. In terms of biological role, usually encoded in the trnK tRNA gene intron. Probably assists in splicing its own and other chloroplast group II introns. This chain is Maturase K, found in Amentotaxus argotaenia (Chinese flowering yew).